Reading from the N-terminus, the 433-residue chain is Probable mannose-6-phosphate isomerase (433 aa).

Zn(2+) is bound by residues glutamine 103, histidine 105, glutamate 130, and histidine 277. Residue arginine 296 is part of the active site.

This sequence belongs to the mannose-6-phosphate isomerase type 1 family. Requires Zn(2+) as cofactor.

The protein localises to the cytoplasm. The enzyme catalyses D-mannose 6-phosphate = D-fructose 6-phosphate. It functions in the pathway nucleotide-sugar biosynthesis; GDP-alpha-D-mannose biosynthesis; alpha-D-mannose 1-phosphate from D-fructose 6-phosphate: step 1/2. Involved in the synthesis of the GDP-mannose and dolichol-phosphate-mannose required for a number of critical mannosyl transfer reactions. This is Probable mannose-6-phosphate isomerase (PMIH) from Echinococcus multilocularis (Fox tapeworm).